The following is an 828-amino-acid chain: Putative alpha-1,3-mannosyltransferase MNN12 (828 aa).

Residues 1-13 are Cytoplasmic-facing; sequence MIEKLTIKRSRQK. A helical membrane pass occupies residues 14–34; sequence VIAYSVIIIWLMIVNIWLLNN. Residues 35–828 lie on the Lumenal side of the membrane; that stretch reads YHLNSSTLTR…YYGDVWVGME (794 aa). Residue N38 is glycosylated (N-linked (GlcNAc...) asparagine). The tract at residues 80–104 is disordered; that stretch reads HQEEDVPNSQSTDNSLIKPTSPAKN. The segment covering 86-103 has biased composition (polar residues); it reads PNSQSTDNSLIKPTSPAK. N-linked (GlcNAc...) asparagine glycans are attached at residues N247, N437, and N591.

The protein belongs to the MNN1/MNT family.

It localises to the golgi apparatus membrane. It participates in protein modification; protein glycosylation. Functionally, responsible for addition of the terminal mannose residues to the outer chain of core N-linked polysaccharides and to O-linked mannotriose. Implicated in late Golgi modifications. This is Putative alpha-1,3-mannosyltransferase MNN12 (MNN12) from Candida albicans (strain SC5314 / ATCC MYA-2876) (Yeast).